A 130-amino-acid chain; its full sequence is Protein UL145 (130 aa).

As to quaternary structure, interacts with host DDB1; this interaction promotes STAT2 degradation.

In terms of biological role, plays a role in the inhibition of host innate immunity by exploiting host DDB1-cullin RING ubiquitin ligases (CRLs). Mechanistically, recruits host DDB1 via a DCAF-like interaction motif to antagonize IFN signaling by STAT2 degradation. In Homo sapiens (Human), this protein is Protein UL145 (UL145).